A 241-amino-acid chain; its full sequence is Ribose-5-phosphate isomerase A (241 aa).

Residues 28-31, 83-86, and 96-99 contribute to the substrate site; these read TGST, DGAD, and KGGG. The active-site Proton acceptor is the E105. K123 is a binding site for substrate.

Belongs to the ribose 5-phosphate isomerase family. Homodimer.

It carries out the reaction aldehydo-D-ribose 5-phosphate = D-ribulose 5-phosphate. It functions in the pathway carbohydrate degradation; pentose phosphate pathway; D-ribose 5-phosphate from D-ribulose 5-phosphate (non-oxidative stage): step 1/1. Catalyzes the reversible conversion of ribose-5-phosphate to ribulose 5-phosphate. This is Ribose-5-phosphate isomerase A from Bradyrhizobium diazoefficiens (strain JCM 10833 / BCRC 13528 / IAM 13628 / NBRC 14792 / USDA 110).